A 435-amino-acid polypeptide reads, in one-letter code: MEFMSSPFPITKLPLVPRCKILKFFDYGDLLDISLCSKRMAQTVRDIHITADLHYLTLGKDNQQSIQIQFKQEQKVIYWDFKLDLVEEEMPERRTVGAIVFEKCRKYSQREIGLFQFSSYHYDIEDSIGEVSKHLFYIFPTSIEIRLSVQFCRTLRNLFSYEHLQNIDVLTLLGSIMLQNVLEKIFSRVKIRRKLWVEPETDDEYPILQALHVENLHLASARWMTRDHLLQLTCCSVDFHEHYFGWKDLTVFAENWLNNKNSKLEMVRFGWPNDIDSLSANFEGLKTHKWDPKQREKKFLYSKDNRLHRIDCTKGLELERDDGELATWIYEPDPLTSSLYFLVWTERFPEKKRLEKLPKMLAPYYEQLVQLRKEYDDSCNLEWLLSNPNLKLDEFVETYRILRGMDSEVRLSSIGRVRRRRIFDEMYNIIDAQND.

The region spanning 7 to 58 is the F-box domain; sequence PFPITKLPLVPRCKILKFFDYGDLLDISLCSKRMAQTVRDIHITADLHYLTL.

This is an uncharacterized protein from Caenorhabditis elegans.